Reading from the N-terminus, the 354-residue chain is Guanine nucleotide-binding protein G(i) subunit alpha-3 (354 aa).

The N-myristoyl glycine moiety is linked to residue Gly2. Residue Cys3 is the site of S-palmitoyl cysteine attachment. The G-alpha domain occupies 32-354; it reads KEVKLLLLGA…KNNLKECGLY (323 aa). Residues 35–48 form a G1 motif region; it reads KLLLLGAGESGKST. GTP contacts are provided by Gly42, Glu43, Ser44, Gly45, Lys46, Ser47, Thr48, Asp150, Ser151, Leu175, Arg176, Thr177, Arg178, Val179, Lys180, Thr181, Val201, Gly203, Asn269, Lys270, Asp272, Leu273, Cys325, Ala326, and Thr327. Ser47 provides a ligand contact to Mg(2+). Positions 173–181 are G2 motif; sequence DVLRTRVKT. Thr181 is a Mg(2+) binding site. The tract at residues 196 to 205 is G3 motif; it reads FKMFDVGGQR. The G4 motif stretch occupies residues 265 to 272; that stretch reads ILFLNKKD. A G5 motif region spans residues 324–329; sequence TCATDT.

This sequence belongs to the G-alpha family. G(i/o/t/z) subfamily. In terms of assembly, heterotrimeric G proteins are composed of 3 units; alpha, beta and gamma. The alpha subunit contains the guanine nucleotide binding site. GTP binding causes dissociation of the heterotrimer, liberating the individual subunits so that they can interact with downstream effector proteins. Forms a complex with CCDC88A/GIV and EGFR which leads to enhanced EGFR signaling and triggering of cell migration; ligand stimulation is required for recruitment of GNAI3 to the complex. Interacts (inactive GDP-bound form) with CCDC88A/GIV (via GBA motif); the interaction leads to activation of GNAI3. Interacts (inactive GDP-bound form) with CCDC88C/DAPLE (via GBA motif); the interaction leads to activation of GNAI3. Interacts (inactive GDP-bound form) with NUCB1 (via GBA motif) and NUCB2 (via GBA motif); the interaction leads to activation of GNAI3. Interacts (inactive GDP-bound form) with PLCD4 (via GBA motif); the interaction leads to activation of GNAI3. Interacts with INSR; the interaction is probably mediated by CCDC88A/GIV. Interacts with GPSM1. Interacts (GDP-bound form) with GPSM2 (via GoLoco domains). Does not interact with RGS2. Interacts with RGS8 and RGS10; this strongly enhances the intrinsic GTPase activity. Interacts with RGS16; this strongly enhances the intrinsic GTPase activity. Interacts with RGS12. Interacts (via active GTP- or inactive GDP-bound form) with RGS14. Interacts (via active GTP-bound form) with TRPC5 (via ANK repeats) in a homotetrameric ion channel; the interaction is direct and activates the channel activity.

The protein localises to the cytoplasm. It localises to the cell membrane. It is found in the cytoskeleton. Its subcellular location is the microtubule organizing center. The protein resides in the centrosome. Heterotrimeric guanine nucleotide-binding proteins (G proteins) function as transducers downstream of G protein-coupled receptors (GPCRs) in numerous signaling cascades. The alpha chain contains the guanine nucleotide binding site and alternates between an active, GTP-bound state and an inactive, GDP-bound state. Signaling by an activated GPCR promotes GDP release and GTP binding. The alpha subunit has a low GTPase activity that converts bound GTP to GDP, thereby terminating the signal. Both GDP release and GTP hydrolysis are modulated by numerous regulatory proteins. Signaling is mediated via effector proteins, such as adenylate cyclase. Inhibits adenylate cyclase activity, leading to decreased intracellular cAMP levels. Stimulates the activity of receptor-regulated K(+) channels. The active GTP-bound form prevents the association of RGS14 with centrosomes and is required for the translocation of RGS14 from the cytoplasm to the plasma membrane. May play a role in cell division. The active GTP-bound form activates the calcium permeant TRPC5 ion channels. This is Guanine nucleotide-binding protein G(i) subunit alpha-3 (GNAI3) from Cricetulus griseus (Chinese hamster).